The chain runs to 532 residues: Glucose-6-phosphate isomerase (532 aa).

Catalysis depends on glutamate 330, which acts as the Proton donor. Catalysis depends on residues histidine 359 and lysine 460.

Belongs to the GPI family.

The protein localises to the cytoplasm. The catalysed reaction is alpha-D-glucose 6-phosphate = beta-D-fructose 6-phosphate. Its pathway is carbohydrate biosynthesis; gluconeogenesis. It functions in the pathway carbohydrate degradation; glycolysis; D-glyceraldehyde 3-phosphate and glycerone phosphate from D-glucose: step 2/4. In terms of biological role, catalyzes the reversible isomerization of glucose-6-phosphate to fructose-6-phosphate. The polypeptide is Glucose-6-phosphate isomerase (Prochlorococcus marinus (strain MIT 9211)).